Reading from the N-terminus, the 240-residue chain is Fimbriae Y protein (240 aa).

Its subcellular location is the fimbrium. The chain is Fimbriae Y protein (fimY) from Salmonella typhimurium (strain LT2 / SGSC1412 / ATCC 700720).